Reading from the N-terminus, the 355-residue chain is Heat-inducible transcription repressor HrcA (355 aa).

The protein belongs to the HrcA family.

Negative regulator of class I heat shock genes (grpE-dnaK-dnaJ and groELS operons). Prevents heat-shock induction of these operons. The sequence is that of Heat-inducible transcription repressor HrcA from Nitratidesulfovibrio vulgaris (strain ATCC 29579 / DSM 644 / CCUG 34227 / NCIMB 8303 / VKM B-1760 / Hildenborough) (Desulfovibrio vulgaris).